A 654-amino-acid chain; its full sequence is Myrosinase-binding protein 2 (654 aa).

Jacalin-type lectin domains lie at Ser2–Ala151, Leu156–Pro291, Pro346–Pro489, and Ala502–Pro645. Over residues Val314 to Pro346 the composition is skewed to pro residues. The segment at Val314 to Asn355 is disordered.

The protein belongs to the jacalin lectin family. As to expression, expressed in flowers. Detected mainly in ovules and styles of immature flowers, but also in pistils, styles, stamens, petals and embryos. Not detected in leaves.

This chain is Myrosinase-binding protein 2 (MBP2), found in Arabidopsis thaliana (Mouse-ear cress).